A 352-amino-acid polypeptide reads, in one-letter code: N-acetyl-gamma-glutamyl-phosphate reductase (352 aa).

The active site involves Cys155.

Belongs to the NAGSA dehydrogenase family. Type 1 subfamily.

The protein resides in the cytoplasm. The catalysed reaction is N-acetyl-L-glutamate 5-semialdehyde + phosphate + NADP(+) = N-acetyl-L-glutamyl 5-phosphate + NADPH + H(+). It functions in the pathway amino-acid biosynthesis; L-arginine biosynthesis; N(2)-acetyl-L-ornithine from L-glutamate: step 3/4. In terms of biological role, catalyzes the NADPH-dependent reduction of N-acetyl-5-glutamyl phosphate to yield N-acetyl-L-glutamate 5-semialdehyde. In Cyanothece sp. (strain PCC 7425 / ATCC 29141), this protein is N-acetyl-gamma-glutamyl-phosphate reductase.